Reading from the N-terminus, the 275-residue chain is Formamidopyrimidine-DNA glycosylase (275 aa).

P2 acts as the Schiff-base intermediate with DNA in catalysis. E3 functions as the Proton donor in the catalytic mechanism. K58 (proton donor; for beta-elimination activity) is an active-site residue. Residues H91, R109, and R154 each coordinate DNA. Residues 240 to 274 form an FPG-type zinc finger; that stretch reads AVYERAGLPCRVCGTPIRRLVQGQRATYFCPSCQK. R264 serves as the catalytic Proton donor; for delta-elimination activity.

The protein belongs to the FPG family. Monomer. The cofactor is Zn(2+).

It catalyses the reaction Hydrolysis of DNA containing ring-opened 7-methylguanine residues, releasing 2,6-diamino-4-hydroxy-5-(N-methyl)formamidopyrimidine.. It carries out the reaction 2'-deoxyribonucleotide-(2'-deoxyribose 5'-phosphate)-2'-deoxyribonucleotide-DNA = a 3'-end 2'-deoxyribonucleotide-(2,3-dehydro-2,3-deoxyribose 5'-phosphate)-DNA + a 5'-end 5'-phospho-2'-deoxyribonucleoside-DNA + H(+). Its function is as follows. Involved in base excision repair of DNA damaged by oxidation or by mutagenic agents. Acts as a DNA glycosylase that recognizes and removes damaged bases. Has a preference for oxidized purines, such as 7,8-dihydro-8-oxoguanine (8-oxoG). Has AP (apurinic/apyrimidinic) lyase activity and introduces nicks in the DNA strand. Cleaves the DNA backbone by beta-delta elimination to generate a single-strand break at the site of the removed base with both 3'- and 5'-phosphates. This is Formamidopyrimidine-DNA glycosylase from Bordetella pertussis (strain Tohama I / ATCC BAA-589 / NCTC 13251).